A 448-amino-acid chain; its full sequence is Phosphoglucosamine mutase (448 aa).

The active-site Phosphoserine intermediate is the S89. Residues S89, D232, D234, and D236 each contribute to the Mg(2+) site. Phosphoserine is present on S89.

Belongs to the phosphohexose mutase family. Forms large aggregates. The cofactor is Mg(2+). In terms of processing, activated by phosphorylation.

The enzyme catalyses alpha-D-glucosamine 1-phosphate = D-glucosamine 6-phosphate. In terms of biological role, catalyzes the conversion of glucosamine-6-phosphate to glucosamine-1-phosphate. This Methanocaldococcus jannaschii (strain ATCC 43067 / DSM 2661 / JAL-1 / JCM 10045 / NBRC 100440) (Methanococcus jannaschii) protein is Phosphoglucosamine mutase (glmM).